The primary structure comprises 367 residues: tRNA-specific 2-thiouridylase MnmA (367 aa).

ATP-binding positions include 12–19 and Met-38; that span reads GMSGGVDS. An interaction with target base in tRNA region spans residues 98-100; it reads NPD. The Nucleophile role is filled by Cys-103. Cysteines 103 and 200 form a disulfide. ATP is bound at residue Gly-128. The interaction with tRNA stretch occupies residues 150 to 152; that stretch reads KDQ. Cys-200 functions as the Cysteine persulfide intermediate in the catalytic mechanism. An interaction with tRNA region spans residues 312–313; the sequence is RY.

Belongs to the MnmA/TRMU family. In terms of assembly, interacts with TusE.

It is found in the cytoplasm. The catalysed reaction is S-sulfanyl-L-cysteinyl-[protein] + uridine(34) in tRNA + AH2 + ATP = 2-thiouridine(34) in tRNA + L-cysteinyl-[protein] + A + AMP + diphosphate + H(+). Its function is as follows. Catalyzes the 2-thiolation of uridine at the wobble position (U34) of tRNA(Lys), tRNA(Glu) and tRNA(Gln), leading to the formation of s(2)U34, the first step of tRNA-mnm(5)s(2)U34 synthesis. Sulfur is provided by IscS, via a sulfur-relay system. Binds ATP and its substrate tRNAs. The protein is tRNA-specific 2-thiouridylase MnmA of Serratia proteamaculans (strain 568).